Here is a 201-residue protein sequence, read N- to C-terminus: Sorting nexin-10 (201 aa).

Residues 8-125 are required for interaction with ATP6V1D; sequence EEFVSVWVRD…SLHLFLQSHL (118 aa). In terms of domain architecture, PX spans 10–127; sequence FVSVWVRDPR…HLFLQSHLNS (118 aa). Arg-53, Lys-79, and Arg-94 together coordinate a 1,2-diacyl-sn-glycero-3-phospho-(1D-myo-inositol-3-phosphate). Residues 155 to 201 are disordered; that stretch reads RFPEEEEEGKKDADVEYDSESSSSGLGHSSDDSSSHGCKTSPALQES.

The protein belongs to the sorting nexin family. In terms of assembly, interacts with ATP6V1D; may play a role in ciliogenesis. Expressed in femur, calvariae and teeth.

The protein localises to the cytoplasm. The protein resides in the endosome membrane. It is found in the cytoskeleton. It localises to the microtubule organizing center. Its subcellular location is the centrosome. Its function is as follows. Probable phosphoinositide-binding protein involved in protein sorting and membrane trafficking in endosomes. Plays a role in cilium biogenesis through regulation of the transport and the localization of proteins to the cilium. Required for the localization to the cilium of V-ATPase subunit ATP6V1D and ATP6V0D1, and RAB8A. Involved in osteoclast differentiation and therefore bone resorption. The sequence is that of Sorting nexin-10 (Snx10) from Mus musculus (Mouse).